The primary structure comprises 84 residues: MPLAKDLLHPSPEEEKRKHKKKRLVQSPNSYFMDVKCPGCYKITTVFSHAQTVVLCVGCSTVLCQPTGGKARLTEGCSFRRKQH.

Residues 1–16 show a composition bias toward basic and acidic residues; it reads MPLAKDLLHPSPEEEK. Positions 1–23 are disordered; the sequence is MPLAKDLLHPSPEEEKRKHKKKR. The residue at position 11 (Ser11) is a Phosphoserine. Residues 38–60 form a C4-type zinc finger; the sequence is PGCYKITTVFSHAQTVVLCVGCS.

Belongs to the eukaryotic ribosomal protein eS27 family. In terms of assembly, component of the small ribosomal subunit. Part of the small subunit (SSU) processome, composed of more than 70 proteins and the RNA chaperone small nucleolar RNA (snoRNA) U3. It depends on Zn(2+) as a cofactor.

The protein localises to the cytoplasm. It localises to the nucleus. Its subcellular location is the nucleolus. Its function is as follows. Component of the small ribosomal subunit. The ribosome is a large ribonucleoprotein complex responsible for the synthesis of proteins in the cell. Required for proper rRNA processing and maturation of 18S rRNAs. Part of the small subunit (SSU) processome, first precursor of the small eukaryotic ribosomal subunit. During the assembly of the SSU processome in the nucleolus, many ribosome biogenesis factors, an RNA chaperone and ribosomal proteins associate with the nascent pre-rRNA and work in concert to generate RNA folding, modifications, rearrangements and cleavage as well as targeted degradation of pre-ribosomal RNA by the RNA exosome. This is Small ribosomal subunit protein eS27 from Mus musculus (Mouse).